We begin with the raw amino-acid sequence, 476 residues long: Cysteine--tRNA ligase (476 aa).

C29 contributes to the Zn(2+) binding site. Positions 31 to 41 (PTVYDYTHLGH) match the 'HIGH' region motif. Residues C209, H234, and E238 each coordinate Zn(2+). The 'KMSKS' region motif lies at 266–270 (KMSKS). K269 is a binding site for ATP.

The protein belongs to the class-I aminoacyl-tRNA synthetase family. Zn(2+) serves as cofactor.

It is found in the cytoplasm. It catalyses the reaction tRNA(Cys) + L-cysteine + ATP = L-cysteinyl-tRNA(Cys) + AMP + diphosphate. In Thermococcus onnurineus (strain NA1), this protein is Cysteine--tRNA ligase.